The chain runs to 467 residues: MWGCPLGLLLLLLAGQAALEARRSRWRRELAPGLHLRGIRDAGGRYCQEQDMCCRGRADECALPYLGATCYCDLFCNRTVSDCCPDFWDFCLGIPPPFPPVQGCMHAGRIYPIFGTYWENCNRCTCHEKGQWECDQEPCLVDPAMIKAINRGNYGWQAGNHSAFWGMTLDEGIRYRLGTIRPSSSVMNMNEIYTVLGQGEVLPTAFEASEKWPNLIHEPLDQGNCAGSWAFSTAAVASDRVSIHSLGHMTPILSPQNLLSCDTHHQKGCRGGRLDGAWWFLRRRGVVSDNCYPFSGREQNDEASPTPRCMMHSRAMGRGKRQATSRCPNSQVDSNDIYQVTPVYRLASDEKEIMKELMENGPVQALMEVHEDFFLYQRGIYSHTPVSQGRPEQYRRHGTHSVKITGWGEETLPDGRTIKYWTAANSWGPWWGERGHFRIVRGINECDIETFVLGVWGRVGMEDMGHH.

Positions 1–21 (MWGCPLGLLLLLLAGQAALEA) are cleaved as a signal peptide. Residues 49–96 (EQDMCCRGRADECALPYLGATCYCDLFCNRTVSDCCPDFWDFCLGIPP) form the SMB domain. 5 disulfides stabilise this stretch: Cys-53–Cys-72, Cys-70–Cys-72, Cys-70–Cys-84, Cys-76–Cys-83, and Cys-84–Cys-91. Asn-77 carries an N-linked (GlcNAc...) asparagine glycan. The N-linked (GlcNAc...) asparagine glycan is linked to Asn-160.

The protein belongs to the peptidase C1 family. Glycosylated.

It localises to the secreted. May be implicated in the adrenocortical zonation and in mechanisms for repressing the CYP11B1 gene expression in adrenocortical cells. This is a non catalytic peptidase C1 family protein. In Rattus norvegicus (Rat), this protein is Tubulointerstitial nephritis antigen-like (Tinagl1).